The sequence spans 499 residues: MVLLYSQASWDKRSKADALVLPFWMKNSKAQEAAVVDEDYKLVYQNALSNFSGKKGETAFLFGNDHTKEQKIVLLGLGKSEEVSGTTVLEAYAQATTVLRKAKCKTVNILLPTISQLRFSVEEFLTNLAAGVLSLNYNYPTYHKVDTSLPFLEKVTVVGIVSKVGDKIFRKEESLFEGVYLTRDLVNTNADEVTPEKLAAVAKGLAGEFASLDVKILDRKAILKEKMGLLAAVAKGAAVEPRFIVLDYQGNPKSKDRTVLIGKGVTFDSGGLDLKPGKAMITMKEDMAGAATVLGIFSALASLELPINVTGIIPATENAIGSAAYKMGDVYVGMTGLSVEIGSTDAEGRLILADAISYALKYCNPTRIIDFATLTGAMVVSLGESVAGFFANNDVLARDLAEASSETGEALWRMPLVEKYDPALHSDIADMKNIGSNRAGSITAALFLQRFLEDNPVAWAHLDIAGTAYHEKEELPYPKYATGFGVRCLIHYMEKFLSK.

Mn(2+) is bound by residues lysine 263 and aspartate 268. Lysine 275 is an active-site residue. Mn(2+) is bound by residues aspartate 286, aspartate 345, and glutamate 347. Arginine 349 is a catalytic residue.

It belongs to the peptidase M17 family. Requires Mn(2+) as cofactor.

Its subcellular location is the cytoplasm. The enzyme catalyses Release of an N-terminal amino acid, Xaa-|-Yaa-, in which Xaa is preferably Leu, but may be other amino acids including Pro although not Arg or Lys, and Yaa may be Pro. Amino acid amides and methyl esters are also readily hydrolyzed, but rates on arylamides are exceedingly low.. It carries out the reaction Release of an N-terminal amino acid, preferentially leucine, but not glutamic or aspartic acids.. Functionally, presumably involved in the processing and regular turnover of intracellular proteins. Catalyzes the removal of unsubstituted N-terminal amino acids from various peptides. In Chlamydia trachomatis serovar A (strain ATCC VR-571B / DSM 19440 / HAR-13), this protein is Probable cytosol aminopeptidase.